Here is a 469-residue protein sequence, read N- to C-terminus: Programmed cell death protein 4 (469 aa).

At M1 the chain carries N-acetylmethionine. Disordered regions lie at residues 1–38 (MDVE…EIKN) and 58–128 (KAKR…GTPG). S25 bears the Phosphoserine mark. Residues 58 to 64 (KAKRRLR) carry the Nuclear localization signal motif. Position 67 is a phosphoserine; by PKB and RPS6KB1 (S67). Residues S68, S71, S76, S78, S80, and S94 each carry the phosphoserine modification. The Phosphodegron motif lies at 70 to 76 (DSGRGDS). Residues 74–83 (GDSVSDSGSD) are compositionally biased toward low complexity. Over residues 114–125 (KKGGAGGKGVWG) the composition is skewed to gly residues. Y152 is modified (phosphotyrosine). An MI 1 domain is found at 163-284 (AFEKTLTPII…CNTYIDSYKG (122 aa)). A Nuclear localization signal motif is present at residues 241-250 (DKLLKDLPEL). Phosphoserine occurs at positions 313 and 317. One can recognise an MI 2 domain in the interval 326 to 449 (HLVKEIDMLL…SKQLRDLCPS (124 aa)). The residue at position 457 (S457) is a Phosphoserine; by PKB.

It belongs to the PDCD4 family. Interacts (via MI domains) with EIF4A2. Interacts (via MI domains) with EIF4A1 (via N-terminal domain). Heterotrimer with EIF4A1; one molecule of PDCD4 binds two molecules of EIF4A1. Interacts with EIF4G1. May form a complex with EIF4A1 and EIF4G1. The interaction between PDCD4 and EIF4A1 interferes with the interaction between EIF4A1 and EIF4G. When phosphorylated, interacts with BTRC and FBXW11. Post-translationally, polyubiquitinated, leading to its proteasomal degradation. Rapidly degraded in response to mitogens. Phosphorylation of the phosphodegron promotes interaction with BTRC and proteasomal degradation. In terms of processing, phosphorylated at Ser-67 by RPS6KB1 in response to mitogens; phosphorylation promotes proteasomal degradation of PDCD4. As to expression, up-regulated in proliferative cells. Highly expressed in epithelial cells of the mammary gland. Reduced expression in lung cancer and colon carcinoma.

It is found in the nucleus. It localises to the cytoplasm. Inhibits translation initiation and cap-dependent translation. May excert its function by hindering the interaction between EIF4A1 and EIF4G. Inhibits the helicase activity of EIF4A. Modulates the activation of JUN kinase. Down-regulates the expression of MAP4K1, thus inhibiting events important in driving invasion, namely, MAPK85 activation and consequent JUN-dependent transcription. May play a role in apoptosis. Tumor suppressor. Inhibits tumor promoter-induced neoplastic transformation. Binds RNA. The polypeptide is Programmed cell death protein 4 (PDCD4) (Homo sapiens (Human)).